We begin with the raw amino-acid sequence, 458 residues long: ATP synthase subunit beta (458 aa).

148–155 (GGAGVGKT) provides a ligand contact to ATP.

Belongs to the ATPase alpha/beta chains family. As to quaternary structure, F-type ATPases have 2 components, CF(1) - the catalytic core - and CF(0) - the membrane proton channel. CF(1) has five subunits: alpha(3), beta(3), gamma(1), delta(1), epsilon(1). CF(0) has three main subunits: a(1), b(2) and c(9-12). The alpha and beta chains form an alternating ring which encloses part of the gamma chain. CF(1) is attached to CF(0) by a central stalk formed by the gamma and epsilon chains, while a peripheral stalk is formed by the delta and b chains.

It localises to the cell inner membrane. The catalysed reaction is ATP + H2O + 4 H(+)(in) = ADP + phosphate + 5 H(+)(out). Produces ATP from ADP in the presence of a proton gradient across the membrane. The catalytic sites are hosted primarily by the beta subunits. This Pseudomonas fluorescens (strain ATCC BAA-477 / NRRL B-23932 / Pf-5) protein is ATP synthase subunit beta.